We begin with the raw amino-acid sequence, 236 residues long: MKIKLLTLAVASLVSVNALAVSIDYRHEMQDTAQAGHKDRLLISHRFANGFGLSSEVKWAQSSADKTPNKPFNEQVSNGTEVVASYVYKFNSVFSIEPGFSLESGSSNNNYRPYLRGRANVTDDLSVALRYRPYFKRNSGNIGKDNTMDKGYTLTGNIDYTFLKDYTIGYELEYKKGTSGKTILSDNDDYDITHNVKLSYKWDKNWKPYVEVGNVSGSETTDERQTRYRVGVQYSF.

The first 20 residues, Met1 to Ala20, serve as a signal peptide directing secretion.

This sequence belongs to the oligogalacturonate-specific porin KdgM (TC 1.B.35) family. In terms of assembly, monomer.

It is found in the cell outer membrane. In terms of biological role, porin specific for oligogalacturonides. Also required for full virulence. This is Oligogalacturonate-specific porin KdgM (kdgM) from Dickeya dadantii (strain 3937) (Erwinia chrysanthemi (strain 3937)).